Here is a 370-residue protein sequence, read N- to C-terminus: tRNA (guanine(26)-N(2))-dimethyltransferase (370 aa).

The region spanning 4–368 is the Trm1 methyltransferase domain; that stretch reads TWVTEGRTTI…APLEEIRDCI (365 aa). S-adenosyl-L-methionine-binding residues include R41, R66, D82, D108, and A109. Residues C237, C240, C256, and C259 each contribute to the Zn(2+) site.

It belongs to the class I-like SAM-binding methyltransferase superfamily. Trm1 family.

The catalysed reaction is guanosine(26) in tRNA + 2 S-adenosyl-L-methionine = N(2)-dimethylguanosine(26) in tRNA + 2 S-adenosyl-L-homocysteine + 2 H(+). Functionally, dimethylates a single guanine residue at position 26 of a number of tRNAs using S-adenosyl-L-methionine as donor of the methyl groups. In Methanospirillum hungatei JF-1 (strain ATCC 27890 / DSM 864 / NBRC 100397 / JF-1), this protein is tRNA (guanine(26)-N(2))-dimethyltransferase.